The sequence spans 372 residues: GDP-mannose 4,6 dehydratase (372 aa).

Residues 1 to 22 (MAHAPASCPSSRNSGDGDKGKP) are disordered. Residue Ala-2 is modified to N-acetylalanine. Residues 30–35 (GITGQD), 55–58 (RRSS), 86–87 (DL), 108–112 (LGAQS), and Tyr-123 each bind NADP(+). Residue Thr-155 is part of the active site. Residues Glu-157 and Tyr-179 each act as nucleophile in the active site. Residues Lys-183, His-209, and Arg-214 each coordinate NADP(+). Tyr-323 is modified (phosphotyrosine).

This sequence belongs to the NAD(P)-dependent epimerase/dehydratase family. GDP-mannose 4,6-dehydratase subfamily. NADP(+) serves as cofactor.

The enzyme catalyses GDP-alpha-D-mannose = GDP-4-dehydro-alpha-D-rhamnose + H2O. It participates in nucleotide-sugar biosynthesis; GDP-L-fucose biosynthesis via de novo pathway; GDP-L-fucose from GDP-alpha-D-mannose: step 1/2. Inhibited by GDP-fucose. Catalyzes the conversion of GDP-D-mannose to GDP-4-dehydro-6-deoxy-D-mannose. This is GDP-mannose 4,6 dehydratase (GMDS) from Cricetulus griseus (Chinese hamster).